A 75-amino-acid chain; its full sequence is Dermaseptin-S11 (75 aa).

The signal sequence occupies residues Met1–Cys22. Residues Glu23 to Arg45 constitute a propeptide that is removed on maturation. The tract at residues Glu25–Lys44 is disordered. A compositionally biased stretch (acidic residues) spans Glu30 to Ser41.

The protein belongs to the frog skin active peptide (FSAP) family. Dermaseptin subfamily. As to expression, expressed by the skin glands.

The protein localises to the secreted. The protein resides in the target cell membrane. Antimicrobial peptide with activity against Gram-positive and Gram-negative bacteria, and fungi. Has hemolytic activity. This Phyllomedusa sauvagei (Sauvage's leaf frog) protein is Dermaseptin-S11.